A 491-amino-acid polypeptide reads, in one-letter code: Glutamyl-tRNA(Gln) amidotransferase subunit A (491 aa).

Catalysis depends on charge relay system residues Lys76 and Ser154. Ser178 serves as the catalytic Acyl-ester intermediate.

Belongs to the amidase family. GatA subfamily. Heterotrimer of A, B and C subunits.

It catalyses the reaction L-glutamyl-tRNA(Gln) + L-glutamine + ATP + H2O = L-glutaminyl-tRNA(Gln) + L-glutamate + ADP + phosphate + H(+). Allows the formation of correctly charged Gln-tRNA(Gln) through the transamidation of misacylated Glu-tRNA(Gln) in organisms which lack glutaminyl-tRNA synthetase. The reaction takes place in the presence of glutamine and ATP through an activated gamma-phospho-Glu-tRNA(Gln). The chain is Glutamyl-tRNA(Gln) amidotransferase subunit A from Cereibacter sphaeroides (strain ATCC 17029 / ATH 2.4.9) (Rhodobacter sphaeroides).